A 417-amino-acid polypeptide reads, in one-letter code: MFSFEKNSLKNTDKEIFDAIELEVKRQHEHVELIASENYASPAVMEAQGSQLTNKYAEGYHGKRYYGGCEFVDIAEKLAIERAQKLFGVDYANVQPHSGSQANAAVYNAVLKPGDTVLGMDLGAGGHLTHGSKVNFSGKIYNSIQYGLSESGDIDYKQVAELAKEHKPKMIIAGFSAFSGIIDWKKFREIADSVDAVLMADIAHVAGLVAAGLYPNPFPYVDVATTTTHKTLRGPRGGLILCNDNPDLAKKFQSAIFPGIQGGPLMHVIAAKAVAFKEALEPSFIDYQKQVLINAKAMEKVLKERNINIISGGTNNHLLLLDITNTGFSGKEAEAALGRANITVNKNSIPNDPRSPFVTSGLRIGSPAITTRGFKEAECEQIANWLADVVYNCGNEKVENETATKVSELCDRFPVYK.

(6S)-5,6,7,8-tetrahydrofolate is bound by residues L122 and 126–128 (GHL). An N6-(pyridoxal phosphate)lysine modification is found at K230. 355-357 (SPF) contributes to the (6S)-5,6,7,8-tetrahydrofolate binding site.

The protein belongs to the SHMT family. In terms of assembly, homodimer. The cofactor is pyridoxal 5'-phosphate.

The protein localises to the cytoplasm. It carries out the reaction (6R)-5,10-methylene-5,6,7,8-tetrahydrofolate + glycine + H2O = (6S)-5,6,7,8-tetrahydrofolate + L-serine. Its pathway is one-carbon metabolism; tetrahydrofolate interconversion. It participates in amino-acid biosynthesis; glycine biosynthesis; glycine from L-serine: step 1/1. Catalyzes the reversible interconversion of serine and glycine with tetrahydrofolate (THF) serving as the one-carbon carrier. This reaction serves as the major source of one-carbon groups required for the biosynthesis of purines, thymidylate, methionine, and other important biomolecules. Also exhibits THF-independent aldolase activity toward beta-hydroxyamino acids, producing glycine and aldehydes, via a retro-aldol mechanism. In Francisella philomiragia subsp. philomiragia (strain ATCC 25017 / CCUG 19701 / FSC 153 / O#319-036), this protein is Serine hydroxymethyltransferase.